Here is a 327-residue protein sequence, read N- to C-terminus: Acetyl-coenzyme A carboxylase carboxyl transferase subunit beta (327 aa).

A CoA carboxyltransferase N-terminal domain is found at 24–293; sequence LWIKCPDTGQ…LTVTTAVEAP (270 aa). Over residues 293 to 311 the composition is skewed to low complexity; it reads PAEAAAKAEPEATTTEQPV. The disordered stretch occupies residues 293-327; the sequence is PAEAAAKAEPEATTTEQPVAPAPTEPPAQPAAPQA. Residues 312–327 show a composition bias toward pro residues; the sequence is APAPTEPPAQPAAPQA.

The protein belongs to the AccD/PCCB family. As to quaternary structure, acetyl-CoA carboxylase is a heterohexamer composed of biotin carboxyl carrier protein (AccB), biotin carboxylase (AccC) and two subunits each of ACCase subunit alpha (AccA) and ACCase subunit beta (AccD).

The protein resides in the cytoplasm. It carries out the reaction N(6)-carboxybiotinyl-L-lysyl-[protein] + acetyl-CoA = N(6)-biotinyl-L-lysyl-[protein] + malonyl-CoA. Its pathway is lipid metabolism; malonyl-CoA biosynthesis; malonyl-CoA from acetyl-CoA: step 1/1. Its function is as follows. Component of the acetyl coenzyme A carboxylase (ACC) complex. Biotin carboxylase (BC) catalyzes the carboxylation of biotin on its carrier protein (BCCP) and then the CO(2) group is transferred by the transcarboxylase to acetyl-CoA to form malonyl-CoA. The chain is Acetyl-coenzyme A carboxylase carboxyl transferase subunit beta from Rhodopseudomonas palustris (strain TIE-1).